The sequence spans 442 residues: Methylenetetrahydrofolate--tRNA-(uracil-5-)-methyltransferase TrmFO 1 (442 aa).

Residue 9 to 14 (GAGLAG) coordinates FAD.

Belongs to the MnmG family. TrmFO subfamily. FAD is required as a cofactor.

It is found in the cytoplasm. It catalyses the reaction uridine(54) in tRNA + (6R)-5,10-methylene-5,6,7,8-tetrahydrofolate + NADH + H(+) = 5-methyluridine(54) in tRNA + (6S)-5,6,7,8-tetrahydrofolate + NAD(+). It carries out the reaction uridine(54) in tRNA + (6R)-5,10-methylene-5,6,7,8-tetrahydrofolate + NADPH + H(+) = 5-methyluridine(54) in tRNA + (6S)-5,6,7,8-tetrahydrofolate + NADP(+). Functionally, catalyzes the folate-dependent formation of 5-methyl-uridine at position 54 (M-5-U54) in all tRNAs. The sequence is that of Methylenetetrahydrofolate--tRNA-(uracil-5-)-methyltransferase TrmFO 1 from Mesoplasma florum (strain ATCC 33453 / NBRC 100688 / NCTC 11704 / L1) (Acholeplasma florum).